The chain runs to 298 residues: Phosphatidylglycerol--prolipoprotein diacylglyceryl transferase (298 aa).

A run of 3 helical transmembrane segments spans residues 17–37 (LAVR…IVVG), 59–79 (MMFY…VLFY), and 97–117 (GGMS…LFAW). A 1,2-diacyl-sn-glycero-3-phospho-(1'-sn-glycerol) is bound at residue arginine 142. 2 helical membrane passes run 230–250 (MGAI…TVEF) and 257–277 (FLGL…PMIV).

It belongs to the Lgt family.

Its subcellular location is the cell inner membrane. It catalyses the reaction L-cysteinyl-[prolipoprotein] + a 1,2-diacyl-sn-glycero-3-phospho-(1'-sn-glycerol) = an S-1,2-diacyl-sn-glyceryl-L-cysteinyl-[prolipoprotein] + sn-glycerol 1-phosphate + H(+). Its pathway is protein modification; lipoprotein biosynthesis (diacylglyceryl transfer). Functionally, catalyzes the transfer of the diacylglyceryl group from phosphatidylglycerol to the sulfhydryl group of the N-terminal cysteine of a prolipoprotein, the first step in the formation of mature lipoproteins. The protein is Phosphatidylglycerol--prolipoprotein diacylglyceryl transferase of Burkholderia cenocepacia (strain ATCC BAA-245 / DSM 16553 / LMG 16656 / NCTC 13227 / J2315 / CF5610) (Burkholderia cepacia (strain J2315)).